Here is a 311-residue protein sequence, read N- to C-terminus: Aspartate carbamoyltransferase catalytic subunit (311 aa).

2 residues coordinate carbamoyl phosphate: Arg55 and Thr56. Position 83 (Lys83) interacts with L-aspartate. 3 residues coordinate carbamoyl phosphate: Arg105, His133, and Gln136. L-aspartate contacts are provided by Arg166 and Arg220. 2 residues coordinate carbamoyl phosphate: Gly261 and Pro262.

Belongs to the aspartate/ornithine carbamoyltransferase superfamily. ATCase family. In terms of assembly, heterododecamer (2C3:3R2) of six catalytic PyrB chains organized as two trimers (C3), and six regulatory PyrI chains organized as three dimers (R2).

The enzyme catalyses carbamoyl phosphate + L-aspartate = N-carbamoyl-L-aspartate + phosphate + H(+). It participates in pyrimidine metabolism; UMP biosynthesis via de novo pathway; (S)-dihydroorotate from bicarbonate: step 2/3. Its function is as follows. Catalyzes the condensation of carbamoyl phosphate and aspartate to form carbamoyl aspartate and inorganic phosphate, the committed step in the de novo pyrimidine nucleotide biosynthesis pathway. This is Aspartate carbamoyltransferase catalytic subunit from Chlorobium chlorochromatii (strain CaD3).